The following is a 431-amino-acid chain: Putative F-box/FBD/LRR-repeat protein At3g56780 (431 aa).

The F-box domain occupies 6–62; that stretch reads CSCINELPDDLILKILSFVSTKHVVVTSLLSKKWKSLWTRVPILKYDVRDHTRFERF. 8 LRR repeats span residues 56 to 82, 88 to 113, 135 to 161, 162 to 187, 209 to 236, 237 to 262, 264 to 285, and 357 to 382; these read HTRF…HVEL, NKDI…EIDA, LKGI…HIDH, SSLF…MVIR, LEGL…HVAR, MEDF…TLEE, TSDV…SIIT, and CSER…KLEH. In terms of domain architecture, FBD spans 391–423; sequence RWEPPSLVPECLLSSLEALEWKGYTGRYGDKDL.

The protein is Putative F-box/FBD/LRR-repeat protein At3g56780 of Arabidopsis thaliana (Mouse-ear cress).